Reading from the N-terminus, the 192-residue chain is Orotate phosphoribosyltransferase (192 aa).

5-phospho-alpha-D-ribose 1-diphosphate contacts are provided by residues Arg-102, Lys-103, Lys-106, and 129-137 (EDVVTTGRS). The orotate site is built by Thr-133 and Arg-161.

Belongs to the purine/pyrimidine phosphoribosyltransferase family. PyrE subfamily. As to quaternary structure, homodimer. Requires Mg(2+) as cofactor.

The enzyme catalyses orotidine 5'-phosphate + diphosphate = orotate + 5-phospho-alpha-D-ribose 1-diphosphate. The protein operates within pyrimidine metabolism; UMP biosynthesis via de novo pathway; UMP from orotate: step 1/2. Functionally, catalyzes the transfer of a ribosyl phosphate group from 5-phosphoribose 1-diphosphate to orotate, leading to the formation of orotidine monophosphate (OMP). The chain is Orotate phosphoribosyltransferase from Prochlorococcus marinus (strain SARG / CCMP1375 / SS120).